Reading from the N-terminus, the 160-residue chain is Small ribosomal subunit protein bS6 (160 aa).

This sequence belongs to the bacterial ribosomal protein bS6 family.

Its function is as follows. Binds together with bS18 to 16S ribosomal RNA. The protein is Small ribosomal subunit protein bS6 of Ureaplasma urealyticum serovar 10 (strain ATCC 33699 / Western).